Reading from the N-terminus, the 346-residue chain is Phosphoribosylformylglycinamidine cyclo-ligase (346 aa).

The protein belongs to the AIR synthase family.

The protein resides in the cytoplasm. It carries out the reaction 2-formamido-N(1)-(5-O-phospho-beta-D-ribosyl)acetamidine + ATP = 5-amino-1-(5-phospho-beta-D-ribosyl)imidazole + ADP + phosphate + H(+). It functions in the pathway purine metabolism; IMP biosynthesis via de novo pathway; 5-amino-1-(5-phospho-D-ribosyl)imidazole from N(2)-formyl-N(1)-(5-phospho-D-ribosyl)glycinamide: step 2/2. The sequence is that of Phosphoribosylformylglycinamidine cyclo-ligase from Geobacillus thermodenitrificans (strain NG80-2).